The primary structure comprises 193 residues: Cerebellin-1 (193 aa).

The first 21 residues, 1 to 21, serve as a signal peptide directing secretion; that stretch reads MLGVLELLLLGAAWLAGPARG. Asparagine 23 carries an N-linked (GlcNAc...) asparagine glycan. Positions 34 to 38 are essential for interaction with NRXN1 and linker of two C1q trimers into disulfide-linked hexamers; it reads CLVVC. Residues 57–193 form the C1q domain; that stretch reads SGSAKVAFSA…TFSGFLVFPL (137 aa). Residues 62–193 form a necessary for interaction with CBLN3, and homotrimerization region; sequence VAFSAIRSTN…TFSGFLVFPL (132 aa). Residue asparagine 79 is glycosylated (N-linked (GlcNAc...) asparagine). Residues 122 to 147 are essential for interaction with GRID2; the sequence is YNRQTIQVSLMLNGWPVISAFAGDQD.

Homohexamer; disulfide-linked homotrimers. The trimers associate via N-terminal cysteine residues to form disulfide-linked hexamers. May form oligomers with CBLN2, CBLN3 AND CBLN4 prior to secretion. Once secreted, does not interact with other CBLN family members. Interacts with GRID1. Interacts with NRXN1 and NRXN2 long (alpha) and short (beta) isoforms produced by alternative promoter usage. Competes with NLGN1 for NRXN1-binding. Weakly interacts with NRXN3 short isoform and not at all with NRXN3 long isoform. Interacts (via C1q domain) with GRID2; GRID2-binding is calcium-independent; CBLN1 hexamers anchor GRID2 N-terminal domain dimers to monomeric NRXN1 isoform beta; promotes synaptogenesis and mediates the D-Serine-dependent long term depression signals and AMPA receptor endocytosis. Interacts with OTOL1. In terms of processing, the proteolytic processing to yield cerebellin seems to occur either prior to the secretion by presynaptic neurons and subsequent oligomerization or in some other location after release of the mature protein. Post-translationally, sialoglycoprotein. In the Purkinje cells postsynaptic structures. In the cerebellum, cerebellin is much less abundant than [des-Ser1]-cerebellin.

Its subcellular location is the secreted. The protein resides in the postsynaptic cell membrane. Functionally, required for synapse integrity and synaptic plasticity. During cerebellar synapse formation, essential for the matching and maintenance of pre- and post-synaptic elements at parallel fiber-Purkinje cell synapses, the establishment of the proper pattern of climbing fiber-Purkinje cell innervation, and induction of long-term depression at parallel fiber-Purkinje cell synapses. Plays a role as a synaptic organizer that acts bidirectionally on both pre- and post-synaptic components. On the one hand induces accumulation of synaptic vesicles in the pre-synaptic part by binding with NRXN1 and in other hand induces clustering of GRID2 and its associated proteins at the post-synaptic site through association of GRID2. NRXN1-CBLN1-GRID2 complex directly induces parallel fiber protrusions that encapsulate spines of Purkinje cells leading to accumulation of GRID2 and synaptic vesicles. Required for CBLN3 export from the endoplasmic reticulum and secretion. NRXN1-CBLN1-GRID2 complex mediates the D-Serine-dependent long term depression signals and AMPA receptor endocytosis. Essential for long-term maintenance but not establishment of excitatory synapses. Inhibits the formation and function of inhibitory GABAergic synapses in cerebellar Purkinje cells. Its function is as follows. The cerebellin peptide exerts neuromodulatory functions. Directly stimulates norepinephrine release via the adenylate cyclase/PKA-dependent signaling pathway; and indirectly enhances adrenocortical secretion in vivo, through a paracrine mechanism involving medullary catecholamine release. The sequence is that of Cerebellin-1 (CBLN1) from Homo sapiens (Human).